The chain runs to 85 residues: UPF0335 protein Oant_1161 (85 aa).

It belongs to the UPF0335 family.

This chain is UPF0335 protein Oant_1161, found in Brucella anthropi (strain ATCC 49188 / DSM 6882 / CCUG 24695 / JCM 21032 / LMG 3331 / NBRC 15819 / NCTC 12168 / Alc 37) (Ochrobactrum anthropi).